The sequence spans 238 residues: Purine nucleoside phosphorylase DeoD-type (238 aa).

Histidine 4 is a binding site for a purine D-ribonucleoside. Phosphate is bound by residues glycine 20, arginine 24, arginine 43, and 87 to 90 (RVGS). A purine D-ribonucleoside-binding positions include 179-181 (EME) and 203-204 (SD). Aspartate 204 functions as the Proton donor in the catalytic mechanism.

This sequence belongs to the PNP/UDP phosphorylase family. As to quaternary structure, homohexamer; trimer of homodimers.

It catalyses the reaction a purine D-ribonucleoside + phosphate = a purine nucleobase + alpha-D-ribose 1-phosphate. It carries out the reaction a purine 2'-deoxy-D-ribonucleoside + phosphate = a purine nucleobase + 2-deoxy-alpha-D-ribose 1-phosphate. Functionally, catalyzes the reversible phosphorolytic breakdown of the N-glycosidic bond in the beta-(deoxy)ribonucleoside molecules, with the formation of the corresponding free purine bases and pentose-1-phosphate. The chain is Purine nucleoside phosphorylase DeoD-type from Mannheimia succiniciproducens (strain KCTC 0769BP / MBEL55E).